The chain runs to 324 residues: 6-methylsalicylic acid decarboxylase (324 aa).

Residues His-7, His-9, His-157, and Asp-274 each contribute to the Zn(2+) site.

It belongs to the metallo-dependent hydrolases superfamily. ACMSD family. In terms of assembly, monomer.

It is found in the cytoplasm. It localises to the cytosol. The catalysed reaction is 6-methylsalicylate + H(+) = 3-methylphenol + CO2. Its pathway is mycotoxin biosynthesis; patulin biosynthesis. In terms of biological role, 6-methylsalicylic acid decarboxylase; part of the gene cluster that mediates the biosynthesis of patulin, an acetate-derived tetraketide mycotoxin produced by several fungal species that shows antimicrobial properties against several bacteria. PatG catalyzes the decarboxylation of 6-methylsalicylic acid to yield m-cresol. The pathway begins with the synthesis of 6-methylsalicylic acid by the polyketide synthase (PKS) patK via condensation of acetate and malonate units. The 6-methylsalicylic acid decarboxylase patG then catalyzes the decarboxylation of 6-methylsalicylic acid to yield m-cresol (also known as 3-methylphenol). These first reactions occur in the cytosol. The intermediate m-cresol is then transported into the endoplasmic reticulum where the cytochrome P450 monooxygenase patH converts it to m-hydroxybenzyl alcohol, which is further converted to gentisyl alcohol by the cytochrome P450 monooxygenase patI. The oxidoreductases patJ and patO further convert gentisyl alcohol to isoepoxydon in the vacuole. PatN catalyzes then the transformation of isoepoxydon into phyllostine. The cluster protein patF is responsible for the conversion from phyllostine to neopatulin whereas the alcohol dehydrogenase patD converts neopatulin to E-ascladiol. The steps between isoepoxydon and E-ascladiol occur in the cytosol, and E-ascladiol is probably secreted to the extracellular space by one of the cluster-specific transporters patC or patM. Finally, the secreted patulin synthase patE catalyzes the conversion of E-ascladiol to patulin. The sequence is that of 6-methylsalicylic acid decarboxylase from Penicillium expansum (Blue mold rot fungus).